The chain runs to 217 residues: Uracil-DNA glycosylase (217 aa).

Asp-62 (proton acceptor) is an active-site residue.

This sequence belongs to the uracil-DNA glycosylase (UDG) superfamily. UNG family.

The protein resides in the cytoplasm. It catalyses the reaction Hydrolyzes single-stranded DNA or mismatched double-stranded DNA and polynucleotides, releasing free uracil.. Excises uracil residues from the DNA which can arise as a result of misincorporation of dUMP residues by DNA polymerase or due to deamination of cytosine. This chain is Uracil-DNA glycosylase, found in Streptococcus pyogenes serotype M18 (strain MGAS8232).